A 363-amino-acid polypeptide reads, in one-letter code: Pyrimidine monooxygenase RutA (363 aa).

FMN contacts are provided by residues 49-50 (IK), Asn115, Glu124, 140-141 (RY), and Ser190.

It belongs to the NtaA/SnaA/DszA monooxygenase family. RutA subfamily.

It catalyses the reaction uracil + FMNH2 + NADH + O2 = (Z)-3-ureidoacrylate + FMN + NAD(+) + H2O + H(+). The catalysed reaction is thymine + FMNH2 + NADH + O2 = (Z)-2-methylureidoacrylate + FMN + NAD(+) + H2O + H(+). Catalyzes the pyrimidine ring opening between N-3 and C-4 by an unusual flavin hydroperoxide-catalyzed mechanism, adding oxygen atoms in the process to yield ureidoacrylate peracid, that immediately reacts with FMN forming ureidoacrylate and FMN-N(5)-oxide. The FMN-N(5)-oxide reacts spontaneously with NADH to produce FMN. Requires the flavin reductase RutF to regenerate FMN in vivo. This chain is Pyrimidine monooxygenase RutA, found in Escherichia coli O6:K15:H31 (strain 536 / UPEC).